The sequence spans 82 residues: UPF0410 protein YeaQ (82 aa).

Transmembrane regions (helical) follow at residues 26–46 (GGGFFMTILLGIVGAVVGGWI) and 57–77 (GFNFGSFVVAVIGAIVVLFIY).

This sequence belongs to the UPF0410 family.

It is found in the cell inner membrane. The protein is UPF0410 protein YeaQ (yeaQ) of Escherichia coli O157:H7.